The primary structure comprises 610 residues: Glutamine--fructose-6-phosphate aminotransferase [isomerizing] (610 aa).

Residue Cys2 is the Nucleophile; for GATase activity of the active site. A Glutamine amidotransferase type-2 domain is found at 2 to 219 (CGIVGATSER…EGDVADINRT (218 aa)). SIS domains follow at residues 287–427 (AADI…YRGM) and 459–600 (LAQD…VDQP). Lys605 acts as the For Fru-6P isomerization activity in catalysis.

In terms of assembly, homodimer.

It is found in the cytoplasm. It catalyses the reaction D-fructose 6-phosphate + L-glutamine = D-glucosamine 6-phosphate + L-glutamate. In terms of biological role, catalyzes the first step in hexosamine metabolism, converting fructose-6P into glucosamine-6P using glutamine as a nitrogen source. In Idiomarina loihiensis (strain ATCC BAA-735 / DSM 15497 / L2-TR), this protein is Glutamine--fructose-6-phosphate aminotransferase [isomerizing].